Reading from the N-terminus, the 125-residue chain is Large-conductance mechanosensitive channel (125 aa).

The next 3 helical transmembrane spans lie at 19-39 (VGVI…KYII), 42-62 (FLGL…IGNA), and 66-86 (VGSF…VFLM).

Belongs to the MscL family. As to quaternary structure, homopentamer.

It is found in the cell membrane. Its function is as follows. Channel that opens in response to stretch forces in the membrane lipid bilayer. May participate in the regulation of osmotic pressure changes within the cell. The sequence is that of Large-conductance mechanosensitive channel from Ligilactobacillus salivarius (strain UCC118) (Lactobacillus salivarius).